The chain runs to 506 residues: Cobyric acid synthase (506 aa).

A GATase cobBQ-type domain is found at 251-448 (DITIAIVQLP…LHGLFDSDAF (198 aa)). Cysteine 332 serves as the catalytic Nucleophile. The active site involves histidine 440.

The protein belongs to the CobB/CobQ family. CobQ subfamily.

It functions in the pathway cofactor biosynthesis; adenosylcobalamin biosynthesis. Its function is as follows. Catalyzes amidations at positions B, D, E, and G on adenosylcobyrinic A,C-diamide. NH(2) groups are provided by glutamine, and one molecule of ATP is hydrogenolyzed for each amidation. In Salmonella heidelberg (strain SL476), this protein is Cobyric acid synthase.